The primary structure comprises 317 residues: Transcription factor MYB35 (317 aa).

HTH myb-type domains follow at residues 9-65 and 66-116; these read KSNV…RPDL and KHDS…KKKL. DNA-binding regions (H-T-H motif) lie at residues 37-61 and 89-112; these read WSLIPKKAGLNRCGKSCRLRWTNYL and WSSIARKLPGRTDNDVKNHWNTKL.

In terms of tissue distribution, inflorescences-specific. Accumulates in anthers, especially in tapetum and meiocytes/microsporocytes and microspores during anther development.

It is found in the nucleus. Functionally, required for anther development and early tapetal function during microspore maturation. Regulates callose dissolution required for microspores release from the tetrads. This is Transcription factor MYB35 from Arabidopsis thaliana (Mouse-ear cress).